The chain runs to 154 residues: Crossover junction endodeoxyribonuclease RuvC (154 aa).

Active-site residues include Asp-7, Glu-67, and Asp-139. Mg(2+) is bound by residues Asp-7, Glu-67, and Asp-139.

It belongs to the RuvC family. In terms of assembly, homodimer which binds Holliday junction (HJ) DNA. The HJ becomes 2-fold symmetrical on binding to RuvC with unstacked arms; it has a different conformation from HJ DNA in complex with RuvA. In the full resolvosome a probable DNA-RuvA(4)-RuvB(12)-RuvC(2) complex forms which resolves the HJ. Mg(2+) serves as cofactor.

The protein resides in the cytoplasm. It catalyses the reaction Endonucleolytic cleavage at a junction such as a reciprocal single-stranded crossover between two homologous DNA duplexes (Holliday junction).. The RuvA-RuvB-RuvC complex processes Holliday junction (HJ) DNA during genetic recombination and DNA repair. Endonuclease that resolves HJ intermediates. Cleaves cruciform DNA by making single-stranded nicks across the HJ at symmetrical positions within the homologous arms, yielding a 5'-phosphate and a 3'-hydroxyl group; requires a central core of homology in the junction. The consensus cleavage sequence is 5'-(A/T)TT(C/G)-3'. Cleavage occurs on the 3'-side of the TT dinucleotide at the point of strand exchange. HJ branch migration catalyzed by RuvA-RuvB allows RuvC to scan DNA until it finds its consensus sequence, where it cleaves and resolves the cruciform DNA. This Parasynechococcus marenigrum (strain WH8102) protein is Crossover junction endodeoxyribonuclease RuvC.